Consider the following 598-residue polypeptide: Kinesin-like protein klp-3 (598 aa).

Coiled coils occupy residues 19–66 and 89–118; these read EVEL…FIQG and GNLS…LETD. The interval 133–155 is disordered; the sequence is ALSRDSSCSVPRSVSPQPTGDVI. A compositionally biased stretch (polar residues) spans 136 to 150; it reads RDSSCSVPRSVSPQP. A coiled-coil region spans residues 170 to 248; that stretch reads HWKKLQRCAE…LVELNGNIRV (79 aa). The 321-residue stretch at 245-565 folds into the Kinesin motor domain; the sequence is NIRVFYRIRP…VNFAEKIGQV (321 aa). 328–335 contributes to the ATP binding site; sequence GHTGSGKT. The interval 569–598 is disordered; the sequence is SGTMKREPTRRSMTGISSGQRREIPASPRK.

The protein belongs to the TRAFAC class myosin-kinesin ATPase superfamily. Kinesin family.

Its subcellular location is the cytoplasm. It localises to the cytoskeleton. The sequence is that of Kinesin-like protein klp-3 (klp-3) from Caenorhabditis elegans.